Reading from the N-terminus, the 273-residue chain is Vacuolar iron transporter (273 aa).

Residues 1–47 (MVSKKTIEARKAYYNEDVVLSKEAHDFYHNLDKHGENHNLDKDNLKT) lie on the Cytoplasmic side of the membrane. A helical membrane pass occupies residues 48–68 (IIFGSLDGIITIFAIVSGCVG). The Vacuolar segment spans residues 69 to 75 (AKITPTQ). Residues 76-96 (VIIIGIGNLFANAISMGFSEY) traverse the membrane as a helical segment. The Cytoplasmic portion of the chain corresponds to 97–181 (TSSTAQRDFM…NEDKNECLKK (85 aa)). Residues E113, E116, E124, E127, M161, and E165 each coordinate Fe cation. The chain crosses the membrane as a helical span at residues 182-202 (GIIMFLSFAVFGIIPLSAYVA). Residues 203–212 (YTVFFGYTDY) are Vacuolar-facing. A helical transmembrane segment spans residues 213–233 (TTSFLVVFISTLTTLFILGLF). Topologically, residues 234–246 (KSQFTNQKPITCA) are cytoplasmic. The chain crosses the membrane as a helical span at residues 247-267 (LYMVLNGMIAGMVPFLLGVVL). Topologically, residues 268-273 (KNNISE) are vacuolar.

Belongs to the CCC1 family. In terms of assembly, monomer.

The protein resides in the vacuole membrane. Its subcellular location is the endoplasmic reticulum membrane. It localises to the cytoplasmic vesicle membrane. The catalysed reaction is Fe(2+)(in) = Fe(2+)(out). Its function is as follows. Vacuolar iron transporter involved in the transfer of iron ions from the cytosol to the vacuole for intracellular iron storage. Involved in detoxification of excess iron. The transport mechanism is not well defined and the role of protons is not clear. The protein is Vacuolar iron transporter of Plasmodium falciparum (isolate 3D7).